Consider the following 242-residue polypeptide: ATP synthase subunit a (242 aa).

A run of 6 helical transmembrane segments spans residues serine 29–tyrosine 49, phenylalanine 84–threonine 104, isoleucine 114–valine 134, phenylalanine 140–isoleucine 160, methionine 181–leucine 201, and phenylalanine 203–glutamine 223.

It belongs to the ATPase A chain family. As to quaternary structure, F-type ATPases have 2 components, CF(1) - the catalytic core - and CF(0) - the membrane proton channel. CF(1) has five subunits: alpha(3), beta(3), gamma(1), delta(1), epsilon(1). CF(0) has three main subunits: a(1), b(2) and c(9-12). The alpha and beta chains form an alternating ring which encloses part of the gamma chain. CF(1) is attached to CF(0) by a central stalk formed by the gamma and epsilon chains, while a peripheral stalk is formed by the delta and b chains.

The protein localises to the cell membrane. Key component of the proton channel; it plays a direct role in the translocation of protons across the membrane. The protein is ATP synthase subunit a of Rickettsia africae (strain ESF-5).